Consider the following 227-residue polypeptide: Enolase-phosphatase E1 (227 aa).

It belongs to the HAD-like hydrolase superfamily. MasA/MtnC family. As to quaternary structure, monomer. Mg(2+) is required as a cofactor.

The catalysed reaction is 5-methylsulfanyl-2,3-dioxopentyl phosphate + H2O = 1,2-dihydroxy-5-(methylsulfanyl)pent-1-en-3-one + phosphate. Its pathway is amino-acid biosynthesis; L-methionine biosynthesis via salvage pathway; L-methionine from S-methyl-5-thio-alpha-D-ribose 1-phosphate: step 3/6. It functions in the pathway amino-acid biosynthesis; L-methionine biosynthesis via salvage pathway; L-methionine from S-methyl-5-thio-alpha-D-ribose 1-phosphate: step 4/6. Its function is as follows. Bifunctional enzyme that catalyzes the enolization of 2,3-diketo-5-methylthiopentyl-1-phosphate (DK-MTP-1-P) into the intermediate 2-hydroxy-3-keto-5-methylthiopentenyl-1-phosphate (HK-MTPenyl-1-P), which is then dephosphorylated to form the acireductone 1,2-dihydroxy-3-keto-5-methylthiopentene (DHK-MTPene). The sequence is that of Enolase-phosphatase E1 from Pseudomonas syringae pv. syringae (strain B728a).